A 597-amino-acid chain; its full sequence is Probable HECT-type ubiquitin ligase-interacting protein creD (597 aa).

Disordered stretches follow at residues E375 to S398 and L432 to P499. Basic and acidic residues predominate over residues T443–R455. Residues P465–R481 are compositionally biased toward low complexity. Over residues R482–V492 the composition is skewed to basic and acidic residues.

This sequence belongs to the arrestin family. As to quaternary structure, interacts with hulA.

In terms of biological role, component of the regulatory network controlling carbon source utilization through ubiquitination and deubiquitination involving creA, creB, creC, creD and acrB. May be involved in signaling by recognizing appropriately phosphorylated substrates via its arrestin domains and then recruit a HECT-type ubiquitin ligase such as hulA, leading to ubiquitination of the substrate, providing a link between ubiquitination and phosphorylation in protein regulation and stability. The sequence is that of Probable HECT-type ubiquitin ligase-interacting protein creD (creD) from Aspergillus oryzae (strain ATCC 42149 / RIB 40) (Yellow koji mold).